We begin with the raw amino-acid sequence, 1227 residues long: DNA-directed RNA polymerase subunit beta (1227 aa).

It belongs to the RNA polymerase beta chain family. As to quaternary structure, the RNAP catalytic core consists of 2 alpha, 1 beta, 1 beta' and 1 omega subunit. When a sigma factor is associated with the core the holoenzyme is formed, which can initiate transcription.

The enzyme catalyses RNA(n) + a ribonucleoside 5'-triphosphate = RNA(n+1) + diphosphate. In terms of biological role, DNA-dependent RNA polymerase catalyzes the transcription of DNA into RNA using the four ribonucleoside triphosphates as substrates. The sequence is that of DNA-directed RNA polymerase subunit beta from Chloroflexus aurantiacus (strain ATCC 29366 / DSM 635 / J-10-fl).